The primary structure comprises 446 residues: MANVVVIGAQWGDEGKGKITDLLSRSADVVVRYQGGVNAGHTVVVNDQTFKLHLIPSGILYPNTDCIIGSGTVIDPKVLIEELDMLDKLGVSTSHLFISESAHVTMPYHRMIDQASEERRGDHKIGTTGRGIGPTYADKSERTGIRILDLMDPEGMKKQLRWTVNYKNVILEKLYNLPHLDPEEVIAEYQVYADRLRPFVADCSLKIYDAYQQHRNILFEGAQGTLLDLDHGTYPYVTSSNPVAGGACVGTGVGPTMIDRVIGVAKAYTTRVGEGPFPTELHDEMGVALCERGAEFGTTTGRRRRCGWFDAVIGRYAVRINGLDCLAVTKLDILDEVDEIKVCVAYEIDGHESKDFPTNARQFSRCNPVYKTLPGWKQSTIHCRTLEDLPPKALDYLKFLASIVEVPIAIVSLGAERDETIIVEDPIHGPKRALLYSNGESQAMSA.

Residues 12–18 and 40–42 each bind GTP; these read GDEGKGK and GHT. The active-site Proton acceptor is the Asp13. Residues Asp13 and Gly40 each coordinate Mg(2+). IMP contacts are provided by residues 13 to 16, 38 to 41, Thr128, Arg142, Gln223, Thr238, and Arg302; these read DEGK and NAGH. The active-site Proton donor is His41. Substrate is bound at residue 298-304; the sequence is TTTGRRR. GTP contacts are provided by residues Arg304, 330-332, and 412-414; these read KLD and SLG.

It belongs to the adenylosuccinate synthetase family. Homodimer. It depends on Mg(2+) as a cofactor.

The protein resides in the cytoplasm. It carries out the reaction IMP + L-aspartate + GTP = N(6)-(1,2-dicarboxyethyl)-AMP + GDP + phosphate + 2 H(+). It participates in purine metabolism; AMP biosynthesis via de novo pathway; AMP from IMP: step 1/2. Its function is as follows. Plays an important role in the de novo pathway of purine nucleotide biosynthesis. Catalyzes the first committed step in the biosynthesis of AMP from IMP. This Acaryochloris marina (strain MBIC 11017) protein is Adenylosuccinate synthetase.